A 338-amino-acid polypeptide reads, in one-letter code: MVEEGGVVVNQGGDQEVVDLPPGFRFHPTDEEIITHYLKEKVFNIRFTAAAIGQADLNKNEPWDLPKIAKMGEKEFYFFCQRDRKYPTGMRTNRATVSGYWKATGKDKEIFRGKGCLVGMKKTLVFYTGRAPKGEKTNWVMHEYRLDGKYSYHNLPKTARDEWVVCRVFHKNAPSTTITTTKQLSRIDSLDNIDHLLDFSSLPPLIDPGFLGQPGPSFSGARQQHDLKPVLHHPTTAPVDNTYLPTQALNFPYHSVHNSGSDFGYGAGSGNNNKGMIKLEHSLVSVSQETGLSSDVNTTATPEISSYPMMMNPAMMDGSKSACDGLDDLIFWEDLYTS.

Residues 20-171 enclose the NAC domain; that stretch reads LPPGFRFHPT…EWVVCRVFHK (152 aa). The DNA-binding element occupies 118–177; the sequence is VGMKKTLVFYTGRAPKGEKTNWVMHEYRLDGKYSYHNLPKTARDEWVVCRVFHKNAPSTT.

As to quaternary structure, interacts with RCD1.

The protein localises to the nucleus. Functionally, transcriptional activator that acts as a positive regulator of leaf senescence. Activates NYC1, SGR1, SGR2 and PAO, which are genes involved in chlorophyll catabolic processes. Activates senescence-associated genes, such as RNS1, SAG12 and SAG13. This chain is NAC domain-containing protein 46, found in Arabidopsis thaliana (Mouse-ear cress).